The primary structure comprises 187 residues: Elongation factor P (187 aa).

It belongs to the elongation factor P family.

Its subcellular location is the cytoplasm. It functions in the pathway protein biosynthesis; polypeptide chain elongation. Functionally, involved in peptide bond synthesis. Stimulates efficient translation and peptide-bond synthesis on native or reconstituted 70S ribosomes in vitro. Probably functions indirectly by altering the affinity of the ribosome for aminoacyl-tRNA, thus increasing their reactivity as acceptors for peptidyl transferase. The chain is Elongation factor P from Helicobacter acinonychis (strain Sheeba).